A 210-amino-acid chain; its full sequence is Peptidyl-tRNA hydrolase (210 aa).

Position 15 (tyrosine 15) interacts with tRNA. Histidine 20 acts as the Proton acceptor in catalysis. Positions 66, 68, and 114 each coordinate tRNA. The interval 186-210 is disordered; it reads IHTSKPPRPKPPRREPGDGGTPATA.

The protein belongs to the PTH family. Monomer.

The protein localises to the cytoplasm. It catalyses the reaction an N-acyl-L-alpha-aminoacyl-tRNA + H2O = an N-acyl-L-amino acid + a tRNA + H(+). In terms of biological role, hydrolyzes ribosome-free peptidyl-tRNAs (with 1 or more amino acids incorporated), which drop off the ribosome during protein synthesis, or as a result of ribosome stalling. Catalyzes the release of premature peptidyl moieties from peptidyl-tRNA molecules trapped in stalled 50S ribosomal subunits, and thus maintains levels of free tRNAs and 50S ribosomes. The protein is Peptidyl-tRNA hydrolase of Variovorax paradoxus (strain S110).